The primary structure comprises 205 residues: Small ribosomal subunit protein uS4 (205 aa).

The region spanning 110–172 (RRLQTIIYRK…VGSPITKEKL (63 aa)) is the S4 RNA-binding domain. A disordered region spans residues 173-205 (MAKPQPASAPKAAAAPKAAAAPAEAAAAPKKEE). Positions 174–205 (AKPQPASAPKAAAAPKAAAAPAEAAAAPKKEE) are enriched in low complexity.

This sequence belongs to the universal ribosomal protein uS4 family. Part of the 30S ribosomal subunit. Contacts protein S5. The interaction surface between S4 and S5 is involved in control of translational fidelity.

In terms of biological role, one of the primary rRNA binding proteins, it binds directly to 16S rRNA where it nucleates assembly of the body of the 30S subunit. With S5 and S12 plays an important role in translational accuracy. In Methanocella arvoryzae (strain DSM 22066 / NBRC 105507 / MRE50), this protein is Small ribosomal subunit protein uS4.